The following is a 123-amino-acid chain: KxDL motif-containing protein LO9-177 (123 aa).

The short motif at 78-81 (KDDL) is the KxDL element.

Belongs to the KXD1 family. Homodimer. Component of a nuclear cell elongation controlling complex made of ILI5/BUL1, LO9-177 and BC1. Binds directly to ILI5/BUL1, ILI4/BU1, BUL2 and BUL3. Binds to BC1 in the nucleus. Interacts with BCL1.

It localises to the nucleus. It is found in the cytoplasm. Functionally, contributes, together with ILI5/BUL1 and BC1, to the promotion of leaf inclination and grain size by modulating cell elongation. This chain is KxDL motif-containing protein LO9-177, found in Oryza sativa subsp. indica (Rice).